Reading from the N-terminus, the 147-residue chain is D-aminoacyl-tRNA deacylase (147 aa).

The Gly-cisPro motif, important for rejection of L-amino acids signature appears at 137-138 (GP).

Belongs to the DTD family. In terms of assembly, homodimer.

Its subcellular location is the cytoplasm. The enzyme catalyses glycyl-tRNA(Ala) + H2O = tRNA(Ala) + glycine + H(+). It carries out the reaction a D-aminoacyl-tRNA + H2O = a tRNA + a D-alpha-amino acid + H(+). In terms of biological role, an aminoacyl-tRNA editing enzyme that deacylates mischarged D-aminoacyl-tRNAs. Also deacylates mischarged glycyl-tRNA(Ala), protecting cells against glycine mischarging by AlaRS. Acts via tRNA-based rather than protein-based catalysis; rejects L-amino acids rather than detecting D-amino acids in the active site. By recycling D-aminoacyl-tRNA to D-amino acids and free tRNA molecules, this enzyme counteracts the toxicity associated with the formation of D-aminoacyl-tRNA entities in vivo and helps enforce protein L-homochirality. This is D-aminoacyl-tRNA deacylase from Levilactobacillus brevis (strain ATCC 367 / BCRC 12310 / CIP 105137 / JCM 1170 / LMG 11437 / NCIMB 947 / NCTC 947) (Lactobacillus brevis).